Reading from the N-terminus, the 312-residue chain is Ribosomal RNA small subunit methyltransferase H (312 aa).

S-adenosyl-L-methionine is bound by residues 32 to 34 (AGH), Asp-52, Phe-79, Asp-100, and Gln-107.

It belongs to the methyltransferase superfamily. RsmH family.

It localises to the cytoplasm. It carries out the reaction cytidine(1402) in 16S rRNA + S-adenosyl-L-methionine = N(4)-methylcytidine(1402) in 16S rRNA + S-adenosyl-L-homocysteine + H(+). Functionally, specifically methylates the N4 position of cytidine in position 1402 (C1402) of 16S rRNA. The sequence is that of Ribosomal RNA small subunit methyltransferase H from Listeria monocytogenes serotype 4b (strain F2365).